The sequence spans 490 residues: Cytochrome P450 71A22 (490 aa).

The helical transmembrane segment at 2-22 (ESMIRIILLSLIIFITILFFI) threads the bilayer. Heme is bound at residue cysteine 432.

The protein belongs to the cytochrome P450 family. The cofactor is heme.

The protein localises to the membrane. The chain is Cytochrome P450 71A22 (CYP71A22) from Arabidopsis thaliana (Mouse-ear cress).